Consider the following 929-residue polypeptide: Isoleucine--tRNA ligase (929 aa).

The 'HIGH' region motif lies at 58–68 (PYANGDIHIGH). Glu-563 lines the L-isoleucyl-5'-AMP pocket. Residues 605 to 609 (KMSKS) carry the 'KMSKS' region motif. Lys-608 contacts ATP. Zn(2+) is bound by residues Cys-892, Cys-895, Cys-912, and Cys-915.

It belongs to the class-I aminoacyl-tRNA synthetase family. IleS type 1 subfamily. In terms of assembly, monomer. Requires Zn(2+) as cofactor.

The protein resides in the cytoplasm. It catalyses the reaction tRNA(Ile) + L-isoleucine + ATP = L-isoleucyl-tRNA(Ile) + AMP + diphosphate. In terms of biological role, catalyzes the attachment of isoleucine to tRNA(Ile). As IleRS can inadvertently accommodate and process structurally similar amino acids such as valine, to avoid such errors it has two additional distinct tRNA(Ile)-dependent editing activities. One activity is designated as 'pretransfer' editing and involves the hydrolysis of activated Val-AMP. The other activity is designated 'posttransfer' editing and involves deacylation of mischarged Val-tRNA(Ile). The protein is Isoleucine--tRNA ligase of Neisseria meningitidis serogroup C (strain 053442).